We begin with the raw amino-acid sequence, 950 residues long: Serine/threonine-protein kinase 10-A (950 aa).

The Protein kinase domain maps to 36 to 294 (WEIIGELGDG…AAQLLEHPFV (259 aa)). Residues 42–50 (LGDGAFGKV) and lysine 65 contribute to the ATP site. Aspartate 157 functions as the Proton acceptor in the catalytic mechanism. The span at 319 to 331 (EEQGEAEEEEDSD) shows a compositional bias: acidic residues. Residues 319–478 (EEQGEAEEEE…DSGSNSASES (160 aa)) are disordered. Residues 347 to 356 (EIGKDIEREQ) show a composition bias toward basic and acidic residues. Positions 365-382 (SATSPQKTDSQADNYSQR) are enriched in polar residues. Over residues 416 to 432 (EPKRNSTAESYRGEEHS) the composition is skewed to basic and acidic residues. Residues 433–445 (SASSQRQRSAQSA) show a composition bias toward low complexity. A compositionally biased stretch (polar residues) spans 452-463 (SFDSPTRYFTNW). Phosphoserine; by PLK1 occurs at positions 482, 486, and 490. Positions 634–786 (IKFLEQLKLR…QLRLRQQQEK (153 aa)) form a coiled coil.

Belongs to the protein kinase superfamily. STE Ser/Thr protein kinase family. STE20 subfamily. Homodimer. In terms of processing, autophosphorylates. Phosphorylated by plk1/plx1, suggesting the existence of a feedback loop with plk1/plx1. activation of the protein.

The protein resides in the cell membrane. The catalysed reaction is L-seryl-[protein] + ATP = O-phospho-L-seryl-[protein] + ADP + H(+). It catalyses the reaction L-threonyl-[protein] + ATP = O-phospho-L-threonyl-[protein] + ADP + H(+). May act as a polo kinase kinase by mediating phosphorylation of plk1/plx1 and subsequent activation of plk1/plx1 during oocyte maturation. The polypeptide is Serine/threonine-protein kinase 10-A (stk10-a) (Xenopus laevis (African clawed frog)).